Here is a 304-residue protein sequence, read N- to C-terminus: Large ribosomal subunit protein uL18z (304 aa).

A disordered region spans residues 285 to 304 (LNALNSSAGADDDDEEEDDE). The segment covering 294 to 304 (ADDDDEEEDDE) has biased composition (acidic residues).

Belongs to the universal ribosomal protein uL18 family. As to quaternary structure, component of the large ribosomal subunit (LSU).

Its subcellular location is the cytoplasm. It is found in the nucleus. In terms of biological role, component of the ribosome, a large ribonucleoprotein complex responsible for the synthesis of proteins in the cell. The small ribosomal subunit (SSU) binds messenger RNAs (mRNAs) and translates the encoded message by selecting cognate aminoacyl-transfer RNA (tRNA) molecules. The large subunit (LSU) contains the ribosomal catalytic site termed the peptidyl transferase center (PTC), which catalyzes the formation of peptide bonds, thereby polymerizing the amino acids delivered by tRNAs into a polypeptide chain. The nascent polypeptides leave the ribosome through a tunnel in the LSU and interact with protein factors that function in enzymatic processing, targeting, and the membrane insertion of nascent chains at the exit of the ribosomal tunnel. This Oryza sativa subsp. japonica (Rice) protein is Large ribosomal subunit protein uL18z (RPL5A).